We begin with the raw amino-acid sequence, 201 residues long: MSSVNLTSLGANQLKNTTTGEMVEIGSLWREQAVVLFFLRRFGCQVCRWMAAEVSKLEKDLKAHGIALVGIGPEETGVKEFKDGGFFKGDIYIDEMKQCYKDLGFKRYNAINVVPAAMGKKVREIASKASAEGIQGNFSGDLLQSGGMLIVAKGGEKVLLHFIQKSPADNPPLEEITKALGISANVQAGEKPQCNEDVCTR.

Belongs to the peroxiredoxin-like PRXL2 family. Prostamide/prostaglandin F synthase subfamily.

It localises to the cytoplasm. Its subcellular location is the cytosol. It carries out the reaction prostaglandin H2 + [thioredoxin]-dithiol = prostaglandin F2alpha + [thioredoxin]-disulfide. It catalyses the reaction prostamide F2alpha + [thioredoxin]-disulfide = prostamide H2 + [thioredoxin]-dithiol. In terms of biological role, catalyzes the reduction of prostaglandin-ethanolamide H(2) (prostamide H(2)) to prostamide F(2alpha) with NADPH as proton donor. Also able to reduce prostaglandin H(2) to prostaglandin F(2alpha). The polypeptide is Prostamide/prostaglandin F synthase (prxl2b) (Danio rerio (Zebrafish)).